Reading from the N-terminus, the 358-residue chain is Isopentenyl-diphosphate delta-isomerase (358 aa).

12–13 (RK) contacts substrate. FMN-binding positions include 69–71 (AMT), Ser-99, and Asn-128. Position 158 (Gln-158) interacts with substrate. Residue Glu-159 participates in Mg(2+) binding. FMN contacts are provided by residues Lys-190, Thr-220, 267–269 (GIR), and 288–289 (AG).

It belongs to the IPP isomerase type 2 family. In terms of assembly, homooctamer. Dimer of tetramers. It depends on FMN as a cofactor. NADPH is required as a cofactor. The cofactor is Mg(2+).

The protein resides in the cytoplasm. The catalysed reaction is isopentenyl diphosphate = dimethylallyl diphosphate. Its function is as follows. Involved in the biosynthesis of isoprenoids. Catalyzes the 1,3-allylic rearrangement of the homoallylic substrate isopentenyl (IPP) to its allylic isomer, dimethylallyl diphosphate (DMAPP). The polypeptide is Isopentenyl-diphosphate delta-isomerase (Listeria welshimeri serovar 6b (strain ATCC 35897 / DSM 20650 / CCUG 15529 / CIP 8149 / NCTC 11857 / SLCC 5334 / V8)).